Reading from the N-terminus, the 100-residue chain is Urease subunit gamma (100 aa).

Belongs to the urease gamma subunit family. Heterotrimer of UreA (gamma), UreB (beta) and UreC (alpha) subunits. Three heterotrimers associate to form the active enzyme.

Its subcellular location is the cytoplasm. It carries out the reaction urea + 2 H2O + H(+) = hydrogencarbonate + 2 NH4(+). The protein operates within nitrogen metabolism; urea degradation; CO(2) and NH(3) from urea (urease route): step 1/1. This Delftia acidovorans (strain DSM 14801 / SPH-1) protein is Urease subunit gamma.